The sequence spans 234 residues: Large ribosomal subunit protein uL1 (234 aa).

Belongs to the universal ribosomal protein uL1 family. As to quaternary structure, part of the 50S ribosomal subunit.

Binds directly to 23S rRNA. The L1 stalk is quite mobile in the ribosome, and is involved in E site tRNA release. In terms of biological role, protein L1 is also a translational repressor protein, it controls the translation of the L11 operon by binding to its mRNA. This chain is Large ribosomal subunit protein uL1, found in Wolinella succinogenes (strain ATCC 29543 / DSM 1740 / CCUG 13145 / JCM 31913 / LMG 7466 / NCTC 11488 / FDC 602W) (Vibrio succinogenes).